Consider the following 153-residue polypeptide: UPF0756 membrane protein LCABL_15860 (153 aa).

4 helical membrane-spanning segments follow: residues 4–24 (WLFL…SLII), 52–72 (WGVT…EIGF), 85–105 (WIAI…VGLL), and 115–135 (LVFG…GPVI).

It belongs to the UPF0756 family.

It is found in the cell membrane. The polypeptide is UPF0756 membrane protein LCABL_15860 (Lacticaseibacillus casei (strain BL23) (Lactobacillus casei)).